The chain runs to 356 residues: DNA polymerase IV (356 aa).

Residues 6–187 (IIHIDMDYFF…LDIGDFPGVG (182 aa)) form the UmuC domain. Residues aspartate 10 and aspartate 105 each contribute to the Mg(2+) site. Residue glutamate 106 is part of the active site.

It belongs to the DNA polymerase type-Y family. In terms of assembly, monomer. It depends on Mg(2+) as a cofactor.

It localises to the cytoplasm. It catalyses the reaction DNA(n) + a 2'-deoxyribonucleoside 5'-triphosphate = DNA(n+1) + diphosphate. In terms of biological role, poorly processive, error-prone DNA polymerase involved in untargeted mutagenesis. Copies undamaged DNA at stalled replication forks, which arise in vivo from mismatched or misaligned primer ends. These misaligned primers can be extended by PolIV. Exhibits no 3'-5' exonuclease (proofreading) activity. May be involved in translesional synthesis, in conjunction with the beta clamp from PolIII. The polypeptide is DNA polymerase IV (Staphylococcus epidermidis (strain ATCC 35984 / DSM 28319 / BCRC 17069 / CCUG 31568 / BM 3577 / RP62A)).